The sequence spans 282 residues: Pantothenate synthetase (282 aa).

30–37 lines the ATP pocket; sequence MGYLHEGH. The active-site Proton donor is H37. Position 61 (Q61) interacts with (R)-pantoate. Q61 contacts beta-alanine. Residue 147–150 participates in ATP binding; the sequence is GQKD. Q153 is a binding site for (R)-pantoate. ATP contacts are provided by residues V176 and 184 to 187; that span reads MSSR.

The protein belongs to the pantothenate synthetase family. As to quaternary structure, homodimer.

It localises to the cytoplasm. It catalyses the reaction (R)-pantoate + beta-alanine + ATP = (R)-pantothenate + AMP + diphosphate + H(+). It participates in cofactor biosynthesis; (R)-pantothenate biosynthesis; (R)-pantothenate from (R)-pantoate and beta-alanine: step 1/1. Its function is as follows. Catalyzes the condensation of pantoate with beta-alanine in an ATP-dependent reaction via a pantoyl-adenylate intermediate. In Caldicellulosiruptor bescii (strain ATCC BAA-1888 / DSM 6725 / KCTC 15123 / Z-1320) (Anaerocellum thermophilum), this protein is Pantothenate synthetase.